The chain runs to 1201 residues: DNA-directed RNA polymerase subunit beta (1201 aa).

The tract at residues 1165 to 1201 is disordered; the sequence is DALSKFKQQQDEKAADKAAKADAAKPSETTNAQQDNQ. Positions 1172–1189 are enriched in basic and acidic residues; it reads QQQDEKAADKAAKADAAK. The span at 1191–1201 shows a compositional bias: polar residues; it reads SETTNAQQDNQ.

Belongs to the RNA polymerase beta chain family. As to quaternary structure, the RNAP catalytic core consists of 2 alpha, 1 beta, 1 beta' and 1 omega subunit. When a sigma factor is associated with the core the holoenzyme is formed, which can initiate transcription.

It catalyses the reaction RNA(n) + a ribonucleoside 5'-triphosphate = RNA(n+1) + diphosphate. Its function is as follows. DNA-dependent RNA polymerase catalyzes the transcription of DNA into RNA using the four ribonucleoside triphosphates as substrates. This chain is DNA-directed RNA polymerase subunit beta, found in Lactiplantibacillus plantarum (strain ATCC BAA-793 / NCIMB 8826 / WCFS1) (Lactobacillus plantarum).